The primary structure comprises 325 residues: G/U mismatch-specific uracil DNA glycosylase (325 aa).

Over residues 1 to 11 (MNDIETRDTGT) the composition is skewed to basic and acidic residues. Positions 1–50 (MNDIETRDTGTKNDNSSEFNLSVKSHKRKRSFDDENLELEESREETSGGI) are disordered. The segment covering 12–23 (KNDNSSEFNLSV) has biased composition (polar residues). Residues 34–43 (DENLELEESR) show a composition bias toward acidic residues.

Belongs to the uracil-DNA glycosylase (UDG) superfamily. TDG/mug family.

The protein resides in the nucleus. It catalyses the reaction Specifically hydrolyzes mismatched double-stranded DNA and polynucleotides, releasing free uracil.. Removes uracil from G/U mispairs in ssDNA. Also corrects G/G mispairs. Does not catalyze the removal of thymine from G/T mispairs. The protein is G/U mismatch-specific uracil DNA glycosylase (thp1) of Schizosaccharomyces pombe (strain 972 / ATCC 24843) (Fission yeast).